Consider the following 101-residue polypeptide: MVCEKCEKKLGTVITPDTWKDGARNTTESGGRKLNENKALTSKKARFDPYGKNKFSTCRICKSSVHQPGSHYCQGCAYKKGICAMCGKKVLDTKNYKQTSV.

Residues 95–101 (NYKQTSV) are sufficient for interaction with DLG4. A PDZ3-binding region spans residues 98 to 101 (QTSV).

It belongs to the CRIPT family. Component of the minor spliceosome. Within this complex, interacts with RNF113A, as well as with SF3B1/SF3b155, SF3B2/SF3b145 and PHF5A/SF3b14b. Interacts with TUBB1. Interacts strongly with the PDZ3 domain of members of the DLG4 family. Associates with microtubules. Interacts with DLG4.

It localises to the cytoplasm. It is found in the synapse. Its subcellular location is the cell projection. The protein resides in the dendritic spine. Its function is as follows. As a component of the minor spliceosome, involved in the splicing of U12-type introns in pre-mRNAs. Involved in the cytoskeletal anchoring of DLG4 in excitatory synapses. In Bos taurus (Bovine), this protein is Cysteine-rich PDZ-binding protein (CRIPT).